A 292-amino-acid polypeptide reads, in one-letter code: 4-hydroxy-tetrahydrodipicolinate synthase (292 aa).

Residue Thr45 participates in pyruvate binding. Tyr133 (proton donor/acceptor) is an active-site residue. Residue Lys161 is the Schiff-base intermediate with substrate of the active site. A pyruvate-binding site is contributed by Ile203.

This sequence belongs to the DapA family. In terms of assembly, homotetramer; dimer of dimers.

The protein localises to the cytoplasm. The enzyme catalyses L-aspartate 4-semialdehyde + pyruvate = (2S,4S)-4-hydroxy-2,3,4,5-tetrahydrodipicolinate + H2O + H(+). It functions in the pathway amino-acid biosynthesis; L-lysine biosynthesis via DAP pathway; (S)-tetrahydrodipicolinate from L-aspartate: step 3/4. In terms of biological role, catalyzes the condensation of (S)-aspartate-beta-semialdehyde [(S)-ASA] and pyruvate to 4-hydroxy-tetrahydrodipicolinate (HTPA). This chain is 4-hydroxy-tetrahydrodipicolinate synthase, found in Erwinia tasmaniensis (strain DSM 17950 / CFBP 7177 / CIP 109463 / NCPPB 4357 / Et1/99).